Here is a 342-residue protein sequence, read N- to C-terminus: S-adenosylmethionine:tRNA ribosyltransferase-isomerase (342 aa).

It belongs to the QueA family. Monomer.

Its subcellular location is the cytoplasm. The enzyme catalyses 7-aminomethyl-7-carbaguanosine(34) in tRNA + S-adenosyl-L-methionine = epoxyqueuosine(34) in tRNA + adenine + L-methionine + 2 H(+). Its pathway is tRNA modification; tRNA-queuosine biosynthesis. Functionally, transfers and isomerizes the ribose moiety from AdoMet to the 7-aminomethyl group of 7-deazaguanine (preQ1-tRNA) to give epoxyqueuosine (oQ-tRNA). This Zymomonas mobilis subsp. mobilis (strain ATCC 31821 / ZM4 / CP4) protein is S-adenosylmethionine:tRNA ribosyltransferase-isomerase.